Here is a 349-residue protein sequence, read N- to C-terminus: ATPase GET3 (349 aa).

Position 27 to 34 (lysine 27 to threonine 34) interacts with ATP. Aspartate 58 is an active-site residue. Glutamate 240 and asparagine 267 together coordinate ATP. Zn(2+) is bound by residues cysteine 280 and cysteine 283.

Belongs to the arsA ATPase family. In terms of assembly, homodimer. Component of the Golgi to ER traffic (GET) complex, which is composed of GET1, GET2 and GET3. Within the complex, GET1 and GET2 form a heterotetramer which is stabilized by phosphatidylinositol binding and which binds to the GET3 homodimer. Interacts with the chloride channel protein GEF1.

The protein localises to the cytoplasm. It is found in the endoplasmic reticulum. The protein resides in the golgi apparatus. Its function is as follows. ATPase required for the post-translational delivery of tail-anchored (TA) proteins to the endoplasmic reticulum. Recognizes and selectively binds the transmembrane domain of TA proteins in the cytosol. This complex then targets to the endoplasmic reticulum by membrane-bound receptors GET1 and GET2, where the tail-anchored protein is released for insertion. This process is regulated by ATP binding and hydrolysis. ATP binding drives the homodimer towards the closed dimer state, facilitating recognition of newly synthesized TA membrane proteins. ATP hydrolysis is required for insertion. Subsequently, the homodimer reverts towards the open dimer state, lowering its affinity for the GET1-GET2 receptor, and returning it to the cytosol to initiate a new round of targeting. Cooperates with the HDEL receptor ERD2 to mediate the ATP-dependent retrieval of resident ER proteins that contain a C-terminal H-D-E-L retention signal from the Golgi to the ER. Involved in low-level resistance to the oxyanions arsenite and arsenate, and in heat tolerance. This is ATPase GET3 from Eremothecium gossypii (strain ATCC 10895 / CBS 109.51 / FGSC 9923 / NRRL Y-1056) (Yeast).